Reading from the N-terminus, the 377-residue chain is MSNVTVSVFTLDKSISEEPVLPSSFIPSSGNVFPKFTSAIPKTAWELWYFDGISKDDRSSIVIGVTRNAEGLKHGGFKVQVFVIWADERTWHRDLFFPESVVSIDESGATEGIWKHATSSSSISFSCAGDLSKASLVFDVPGIVQGDMHLEALPGDTGLDTDATLGPSVYYVRPLGRASVKAQLSLYSSDATAAEQFILGTSANGGMDRVWSPLSWPQVMTESYYLRAQVGPYAMQIMRIFPPKGSENSENQPSTMARLYREGQLICAPQHVVTRDDALITHDSLILSKQNTSDSGDAVTGEYRDKNTGYTVEFVGKGNEEQRWEFQVRHERIIWNTPTSRPGPDATGNTGFVERLYGGTIGESYEGVGTGGQCELS.

This sequence belongs to the Diels-Alderase family.

It carries out the reaction (5S)-3-[(2E,6R,8E,10E,12E)-2,6-dimethyltetradeca-2,8,10,12-tetraenoyl]-5-(hydroxymethyl)pyrrolidine-2,4-dione = trichosetin. Its pathway is mycotoxin biosynthesis. Diels-Alderase; part of the gene cluster that mediates the biosynthesis of equisetin, a trans-fused decalin-containing tetramic acid with antimicrobial activity. The PKS module of eqxS together with the enoylreductase eqxC catalyze the formation of the polyketide unit which is then conjugated to L-serine by the condensation domain of the eqxS NRPS module. Activity of the Dieckmann cyclase domain (RED) results in release of the Dieckmann product intermediate. Diels-Alderase eqx3 is involved in endo-selective Diels-Alder cycloaddition to form the decalin ring, leading to the production of N-desmethylequisetin also called trichosetin. Subsequent N-methylation is carried out by eqxD to give equisetin. The sequence is that of Diels-Alderase fsa2 from Fusarium heterosporum.